The primary structure comprises 121 residues: Ribosome-binding factor A (121 aa).

This sequence belongs to the RbfA family. As to quaternary structure, monomer. Binds 30S ribosomal subunits, but not 50S ribosomal subunits or 70S ribosomes.

The protein localises to the cytoplasm. Its function is as follows. One of several proteins that assist in the late maturation steps of the functional core of the 30S ribosomal subunit. Associates with free 30S ribosomal subunits (but not with 30S subunits that are part of 70S ribosomes or polysomes). Required for efficient processing of 16S rRNA. May interact with the 5'-terminal helix region of 16S rRNA. The chain is Ribosome-binding factor A from Brevibacillus brevis (strain 47 / JCM 6285 / NBRC 100599).